A 148-amino-acid chain; its full sequence is Hemoglobin subunit gamma (148 aa).

One can recognise a Globin domain in the interval 3–148; it reads HFTAEEKAII…VAIAMGHKYH (146 aa). H64 and H93 together coordinate heme b.

Belongs to the globin family. Heterotetramer of two alpha chains and two gamma chains in fetal hemoglobin (Hb F). As to expression, red blood cells.

Its function is as follows. Gamma chains make up the fetal hemoglobin F, in combination with alpha chains. The polypeptide is Hemoglobin subunit gamma (HBG) (Carlito syrichta (Philippine tarsier)).